A 226-amino-acid polypeptide reads, in one-letter code: Large ribosomal subunit protein uL1 (226 aa).

This sequence belongs to the universal ribosomal protein uL1 family. Part of the 50S ribosomal subunit.

Functionally, binds directly to 23S rRNA. The L1 stalk is quite mobile in the ribosome, and is involved in E site tRNA release. Protein L1 is also a translational repressor protein, it controls the translation of the L11 operon by binding to its mRNA. This chain is Large ribosomal subunit protein uL1, found in Treponema pallidum (strain Nichols).